A 160-amino-acid polypeptide reads, in one-letter code: Transcription elongation factor GreA (160 aa).

The stretch at 53–73 (AREEQGMVEARIRDIEGRLQN) forms a coiled coil.

It belongs to the GreA/GreB family.

Necessary for efficient RNA polymerase transcription elongation past template-encoded arresting sites. The arresting sites in DNA have the property of trapping a certain fraction of elongating RNA polymerases that pass through, resulting in locked ternary complexes. Cleavage of the nascent transcript by cleavage factors such as GreA or GreB allows the resumption of elongation from the new 3'terminus. GreA releases sequences of 2 to 3 nucleotides. In Pseudomonas putida (strain ATCC 47054 / DSM 6125 / CFBP 8728 / NCIMB 11950 / KT2440), this protein is Transcription elongation factor GreA.